Here is a 633-residue protein sequence, read N- to C-terminus: NADPH-dependent diflavin oxidoreductase 1 (633 aa).

Residues 5–149 (CTIIYATESG…EVEKWSQELI (145 aa)) enclose the Flavodoxin-like domain. FMN contacts are provided by residues 11–16 (TESGTS), 58–61 (STTG), and aspartate 131. Residues 196–442 (TQFYKSKLKV…FIKESGARLP (247 aa)) enclose the FAD-binding FR-type domain. FAD contacts are provided by residues 377–380 (RPFS) and 412–415 (GLCS). NADP(+) is bound by residues threonine 456, 520–521 (SR), 528–532 (KVYVQ), and aspartate 565. The segment at 580–610 (KNNNNNNNNNNNNNNNNNNNNNNNNNDDENN) is disordered. Residues 581–604 (NNNNNNNNNNNNNNNNNNNNNNNN) are compositionally biased toward low complexity. Tryptophan 633 lines the FAD pocket.

The protein belongs to the NADPH-dependent diflavin oxidoreductase NDOR1 family. It in the N-terminal section; belongs to the flavodoxin family. In the C-terminal section; belongs to the flavoprotein pyridine nucleotide cytochrome reductase family. Requires FAD as cofactor. FMN serves as cofactor.

It is found in the cytoplasm. It carries out the reaction 2 oxidized [2Fe-2S]-[protein] + NADPH = 2 reduced [2Fe-2S]-[protein] + NADP(+) + H(+). Functionally, NADPH-dependent reductase which is a central component of the cytosolic iron-sulfur (Fe-S) protein assembly (CIA) machinery. Transfers electrons from NADPH via its FAD and FMN prosthetic groups to the [2Fe-2S] cluster of the anamorsin/DRE2 homolog, another key component of the CIA machinery. In turn, this reduced cluster provides electrons for assembly of cytosolic iron-sulfur cluster proteins. The protein is NADPH-dependent diflavin oxidoreductase 1 (redC) of Dictyostelium discoideum (Social amoeba).